The sequence spans 382 residues: MNPANFQPPNPPFHWAPMLPPDPPRCGMFWNTKNITDQLKQLQDTLNLAKSMEKELEALKMIKDAKGSVENAVQDSGVEYLEARKMDLGQQEMLSVDAANSLMSTLRAQLEPFRFVVDENSPWEEKSAAVRLTCKMKKSIRNKLWKKRKRRCAAEMRAKEPERFEQADREADEWREKEMAKDMANRKVDEMKAIEKIKAKRERKRLEPELELALIVEEMQELRSLRIEKLKKQGHFLPEEDDKFFESVRAAVEQEENQAQSLINTETEEHVIASEENTTLTTSNKTNNDTDKDSNTNAASCERTMKAPDNGCDNISNLPVEVYHYYYGSNIDMGRLIEIRREWDAYLSAGGSRIPGHWVQPSPPANEIWASCLVNTPKRDLS.

Residues 31 to 63 (NTKNITDQLKQLQDTLNLAKSMEKELEALKMIK) are a coiled coil. The interval 274–297 (SEENTTLTTSNKTNNDTDKDSNTN) is disordered. Residues 277–287 (NTTLTTSNKTN) are compositionally biased toward low complexity.

In terms of assembly, component of the U11/U12 snRNPs that are part of the U12-type spliceosome.

It localises to the nucleus. This chain is U11/U12 small nuclear ribonucleoprotein 59 kDa protein (SNRNP59), found in Arabidopsis thaliana (Mouse-ear cress).